A 172-amino-acid chain; its full sequence is EPLLDSEGELVRNGGTYYLLPDRWALGGGIEAAATGTETCPLTVVRSPNEVSVGEPLRISSQLRSGFIPDYSLVRIGFANPPKCAPSPWWTVVEDQPQQPSVKLSELKSTKFDYLFKFEKVTSKFSSYKLKYCAKRDTCKDIGIYRDQKGYARLVVTDENPLVVIFKKVESS.

Cystine bridges form between cysteine 40/cysteine 84 and cysteine 133/cysteine 139.

Belongs to the protease inhibitor I3 (leguminous Kunitz-type inhibitor) family.

In terms of biological role, WTI-1B inhibits trypsin stoichiometrically. This Psophocarpus tetragonolobus (Winged bean) protein is Trypsin inhibitor 1B.